A 249-amino-acid polypeptide reads, in one-letter code: Adapter protein MecA (249 aa).

This sequence belongs to the MecA family. As to quaternary structure, homodimer.

Enables the recognition and targeting of unfolded and aggregated proteins to the ClpC protease or to other proteins involved in proteolysis. The chain is Adapter protein MecA from Streptococcus thermophilus (strain ATCC BAA-250 / LMG 18311).